We begin with the raw amino-acid sequence, 86 residues long: Small ribosomal subunit protein uS17 (86 aa).

The protein belongs to the universal ribosomal protein uS17 family. Part of the 30S ribosomal subunit.

Its function is as follows. One of the primary rRNA binding proteins, it binds specifically to the 5'-end of 16S ribosomal RNA. The polypeptide is Small ribosomal subunit protein uS17 (Caldicellulosiruptor bescii (strain ATCC BAA-1888 / DSM 6725 / KCTC 15123 / Z-1320) (Anaerocellum thermophilum)).